A 120-amino-acid polypeptide reads, in one-letter code: HTH-type transcriptional regulator MerD (120 aa).

The 70-residue stretch at alanine 3–alanine 72 folds into the HTH merR-type domain. Positions valine 6–valine 25 form a DNA-binding region, H-T-H motif.

In Shigella flexneri, this protein is HTH-type transcriptional regulator MerD (merD).